Reading from the N-terminus, the 295-residue chain is Deoxyuridine 5'-triphosphate nucleotidohydrolase (295 aa).

178-180 contacts substrate; sequence RSG. Positions 260-272 are enriched in basic and acidic residues; sequence NSVRKHTHEDNPV. The segment at 260–295 is disordered; it reads NSVRKHTHEDNPVHEPNVATASADIRGTKGLGSSGF.

This sequence belongs to the dUTPase family. Mg(2+) serves as cofactor.

The catalysed reaction is dUTP + H2O = dUMP + diphosphate + H(+). Functionally, involved in nucleotide metabolism: produces dUMP, the immediate precursor of thymidine nucleotides and decreases the intracellular concentration of dUTP to avoid uracil incorporation into viral DNA. The protein is Deoxyuridine 5'-triphosphate nucleotidohydrolase of Human herpesvirus 8 type P (isolate GK18) (HHV-8).